A 207-amino-acid polypeptide reads, in one-letter code: Phosphoribosylglycinamide formyltransferase (207 aa).

13-15 serves as a coordination point for N(1)-(5-phospho-beta-D-ribosyl)glycinamide; sequence GSN. (6R)-10-formyltetrahydrofolate is bound by residues 100–103 and asparagine 120; that span reads MHIL. The active-site Proton donor is histidine 122. Aspartate 162 contacts (6R)-10-formyltetrahydrofolate. N(1)-(5-phospho-beta-D-ribosyl)glycinamide is bound at residue glutamate 191.

This sequence belongs to the GART family.

It carries out the reaction N(1)-(5-phospho-beta-D-ribosyl)glycinamide + (6R)-10-formyltetrahydrofolate = N(2)-formyl-N(1)-(5-phospho-beta-D-ribosyl)glycinamide + (6S)-5,6,7,8-tetrahydrofolate + H(+). Its pathway is purine metabolism; IMP biosynthesis via de novo pathway; N(2)-formyl-N(1)-(5-phospho-D-ribosyl)glycinamide from N(1)-(5-phospho-D-ribosyl)glycinamide (10-formyl THF route): step 1/1. This is Phosphoribosylglycinamide formyltransferase (ade5) from Schizosaccharomyces pombe (strain 972 / ATCC 24843) (Fission yeast).